The following is a 337-amino-acid chain: Putative 2-aminoethylphosphonate-binding periplasmic protein (337 aa).

Positions 1–21 are cleaved as a signal peptide; sequence MKLSRLALLSVFALASAPSWA.

This sequence belongs to the bacterial solute-binding protein 1 family.

It is found in the periplasm. Probably part of the PhnSTUV complex (TC 3.A.1.11.5) involved in 2-aminoethylphosphonate import. In Salmonella paratyphi A (strain ATCC 9150 / SARB42), this protein is Putative 2-aminoethylphosphonate-binding periplasmic protein (phnS).